A 338-amino-acid chain; its full sequence is Heat-inducible transcription repressor HrcA (338 aa).

Belongs to the HrcA family.

Its function is as follows. Negative regulator of class I heat shock genes (grpE-dnaK-dnaJ and groELS operons). Prevents heat-shock induction of these operons. This Bacillus cereus (strain 03BB102) protein is Heat-inducible transcription repressor HrcA.